An 840-amino-acid chain; its full sequence is Radial spoke head 10 homolog B (840 aa).

Basic and acidic residues-rich tracts occupy residues 1–16 (MVKE…DKSA) and 51–63 (QPKD…EVKS). Residues 1–74 (MVKEKKKADK…SLPNEDTTQY (74 aa)) are disordered. MORN repeat units lie at residues 86-108 (SYEG…QGGC), 109-131 (TYQG…ADGL), 132-154 (KYEG…PDGS), 155-177 (TYEG…STQP), 179-201 (SYIG…NQEG), 204-226 (WYEG…KSGN), 227-249 (IYEG…LTTN), 251-273 (EYTG…FLKR), 284-306 (EYVG…ASGA), and 307-329 (MYEG…KNGR). Residues 758-801 (KEKVKENRLHNEAMALQRKMENEELEARLNSLREEEAKRQDYEV) are a coiled coil. The disordered stretch occupies residues 810–840 (VDAPSSSFTPSPPKEDTVVSSKSITSKKKKK).

As to quaternary structure, interacts with RSPH6A. Does not appear to be part of the axonemal radial spoke complexes 1 or 2.

It is found in the cytoplasm. It localises to the cytoskeleton. Its subcellular location is the cilium axoneme. The protein localises to the cell projection. The protein resides in the cilium. It is found in the flagellum. May function as part of the axonemal radial spoke complex 3 (RS3). Radial spoke complexes are important for ciliary motility. This chain is Radial spoke head 10 homolog B (RSPH10B), found in Bos taurus (Bovine).